The primary structure comprises 179 residues: Repressor of phase 1 flagellin gene (179 aa).

In terms of biological role, transcriptional repressor of the FliC phase-1 flagellin. The sequence is that of Repressor of phase 1 flagellin gene (fljA) from Salmonella abortus-equi.